The sequence spans 361 residues: Protein SGT1 homolog (361 aa).

TPR repeat units follow at residues 3–36 (ASDL…GPAT), 37–70 (ADLY…DPTM), and 71–104 (HKAY…APGD). Position 150 is a phosphothreonine (threonine 150). Residues 159 to 248 (KPKYRHDYYN…AEQVTWTTLD (90 aa)) enclose the CS domain. Residues 255–295 (AIPQKISTPAETAPRPSYPSSKSKKDWDKLEAEVKKEEKEE) form a disordered region. Threonine 262 is subject to Phosphothreonine. Positions 271 to 361 (SYPSSKSKKD…DGMELKKWEI (91 aa)) constitute an SGS domain. Residues 277–295 (SKKDWDKLEAEVKKEEKEE) are compositionally biased toward basic and acidic residues.

The protein belongs to the SGT1 family. In terms of processing, constitutively phosphorylated at Thr-262 and phosphorylated at Thr-150 upon infection with the fungal pathogen Ustilago maydis.

The protein localises to the cytoplasm. The protein resides in the nucleus. In terms of biological role, may act as positive regulator of basal defense. May be involved in basal disease resistance to the fungal pathogen Ustilago maydis. The protein is Protein SGT1 homolog of Zea mays (Maize).